The chain runs to 401 residues: MKPTEIKKPYRMEEFLRPQMFQEVAQMVHFQWRRNPVDNSMVNASMVPFCLSAFLNVLFFGCNGWDIIGHFWLGHPANQNPPVLSITIYFSIRGLMLYLKRKEIVEFVNDLDRECPRDLVSQLDMQMDETYRNFWQRYRFIRIYSHLGGPMFCVVPLALFLLTHEGKDTPVAQHEQLLGGWLPCGVRKDPNFYLLVWSFDLMCTTCGVSFFVTFDNLFNVMQGHLVMHLGHLARQFSAIDPRQSLTDEKRFFVDLRLLVQRQQLLNGLCRKYNDIFKVAFLVSNFVGAGSLCFYLFMLSETSDVLIIAQYILPTLVLVGFTFEICLRGTQLEKASEGLESSLRSQEWYLGSRRYRKFYLLWTQYCQRTQQLGAFGLIQVNMVHFTEIMQLAYRLFTFLKSH.

The Cytoplasmic portion of the chain corresponds to 1–26 (MKPTEIKKPYRMEEFLRPQMFQEVAQ). Residues 27-47 (MVHFQWRRNPVDNSMVNASMV) traverse the membrane as a helical segment. Residues 48 to 52 (PFCLS) lie on the Extracellular side of the membrane. The helical transmembrane segment at 53-73 (AFLNVLFFGCNGWDIIGHFWL) threads the bilayer. The Cytoplasmic segment spans residues 74–142 (GHPANQNPPV…NFWQRYRFIR (69 aa)). Residues 143–163 (IYSHLGGPMFCVVPLALFLLT) form a helical membrane-spanning segment. Residues 164 to 191 (HEGKDTPVAQHEQLLGGWLPCGVRKDPN) lie on the Extracellular side of the membrane. A helical transmembrane segment spans residues 192–212 (FYLLVWSFDLMCTTCGVSFFV). The Cytoplasmic segment spans residues 213–277 (TFDNLFNVMQ…LCRKYNDIFK (65 aa)). The chain crosses the membrane as a helical span at residues 278–298 (VAFLVSNFVGAGSLCFYLFML). At 299 to 303 (SETSD) the chain is on the extracellular side. Residues 304-324 (VLIIAQYILPTLVLVGFTFEI) form a helical membrane-spanning segment. Residues 325–370 (CLRGTQLEKASEGLESSLRSQEWYLGSRRYRKFYLLWTQYCQRTQQ) are Cytoplasmic-facing. The helical transmembrane segment at 371 to 391 (LGAFGLIQVNMVHFTEIMQLA) threads the bilayer. The Extracellular segment spans residues 392–401 (YRLFTFLKSH).

It belongs to the insect chemoreceptor superfamily. Heteromeric odorant receptor channel (TC 1.A.69) family. Or49a subfamily. In terms of assembly, interacts with Orco. Complexes exist early in the endomembrane system in olfactory sensory neurons (OSNs), coupling these complexes to the conserved ciliary trafficking pathway. As to expression, expressed in olfactory sensory neurons in the antenna.

The protein localises to the cell membrane. In terms of biological role, odorant receptor which mediates acceptance or avoidance behavior, depending on its substrates. The odorant receptor repertoire encodes a large collection of odor stimuli that vary widely in identity, intensity, and duration. May form a complex with Orco to form odorant-sensing units, providing sensitive and prolonged odorant signaling and calcium permeability. The protein is Odorant receptor 88a (Or88a) of Drosophila melanogaster (Fruit fly).